The sequence spans 99 residues: Large ribosomal subunit protein eL30 (99 aa).

The protein belongs to the eukaryotic ribosomal protein eL30 family.

This Pyrococcus horikoshii (strain ATCC 700860 / DSM 12428 / JCM 9974 / NBRC 100139 / OT-3) protein is Large ribosomal subunit protein eL30 (rpl30e).